A 480-amino-acid polypeptide reads, in one-letter code: Probable G-protein coupled receptor Mth-like 6 (480 aa).

An N-terminal signal peptide occupies residues 1-20 (MLLNILAIILVFVISSQSEA). Residues 21–202 (VIPGCDYFDT…LEHVYIPKSM (182 aa)) lie on the Extracellular side of the membrane. Cystine bridges form between Cys-25–Cys-78, Cys-80–Cys-85, Cys-89–Cys-179, and Cys-90–Cys-101. N-linked (GlcNAc...) asparagine glycosylation occurs at Asn-40. N-linked (GlcNAc...) asparagine glycans are attached at residues Asn-160 and Asn-170. A helical membrane pass occupies residues 203–225 (PAVPQVGTISMVGCILTIAVYLY). Over 226-231 (IKKLRN) the chain is Cytoplasmic. A helical transmembrane segment spans residues 232–254 (LLGKCFICYVFCKFVQYLIWAGG). The Extracellular portion of the chain corresponds to 255–263 (DLNLWNNIC). The chain crosses the membrane as a helical span at residues 264 to 283 (SLAGYTNYFFALASHFWLSV). The Cytoplasmic portion of the chain corresponds to 284–303 (MSHQIWKNLRLINRDERSYH). A helical membrane pass occupies residues 304 to 326 (FLIYNIYGWGTPAIMTAITYLVD). Residues 327–356 (WAWEDRPDKLNWIPGVGLYRCWINTYDWSA) are Extracellular-facing. The chain crosses the membrane as a helical span at residues 357–379 (MIYLYGPMLILSLFNVVTFILTV). The Cytoplasmic portion of the chain corresponds to 380–405 (NHIMKIKSSVKSSTQQQRKCIQNNDF). The helical transmembrane segment at 406–428 (LLYLRLSVMMGVTGISEVITYFV) threads the bilayer. At 429–437 (KRHKFWRQV) the chain is on the extracellular side. The helical transmembrane segment at 438-457 (LRVPNFFHLGSGIVVFVLFI) threads the bilayer. Residues 458 to 480 (LKRSTFQMIMERISGPRRQQPAS) are Cytoplasmic-facing.

This sequence belongs to the G-protein coupled receptor 2 family. Mth subfamily.

It is found in the cell membrane. This is Probable G-protein coupled receptor Mth-like 6 (mthl6) from Drosophila melanogaster (Fruit fly).